Reading from the N-terminus, the 238-residue chain is Zwei Ig domain protein zig-2 (238 aa).

The signal sequence occupies residues 1-17 (MLKFTAISFVLLNAAES). The Ig-like C2-type 1 domain occupies 31-130 (PLLKFTRTPN…NGLTKLEHVA (100 aa)). N-linked (GlcNAc...) asparagine glycans are attached at residues N40 and N43. Cysteines 54 and 117 form a disulfide. 3 N-linked (GlcNAc...) asparagine glycosylation sites follow: N137, N206, and N216. An Ig-like C2-type 2 domain is found at 149–230 (PFISMTVDFR…NHFGETTAIT (82 aa)). Residues C170 and C217 are joined by a disulfide bond.

As to expression, expressed in PVT neurons and weakly in some head neurons.

The protein localises to the secreted. Its function is as follows. Probably not involved in maintaining the position of ASI and ASH head neuron cell bodies and ventral nerve cord axons of PVQ, PVP, RMEV, AVK and HSN neurons. The chain is Zwei Ig domain protein zig-2 from Caenorhabditis elegans.